We begin with the raw amino-acid sequence, 147 residues long: METLITISRWLAKQHVVTWCVQQEGELWCANAFYLFDAQKVAFYILTEEKTRHAQMSGPQAAVAGTVNGQPKTVALIRGVQFKGEIRRLEGEESDLARKAYNRRFPVARMLSAPVWEIRLDEIKFTDNTLGFGKKMIWLRGSGTEQA.

Belongs to the UPF0306 family.

This is UPF0306 protein YhbP from Shigella dysenteriae serotype 1 (strain Sd197).